The chain runs to 537 residues: Ribonuclease Y (537 aa).

Residues 4 to 24 (FPIIMSVFAAIIGLVIGYVSV) form a helical membrane-spanning segment. The interval 112-148 (ASTLDRKDDNLSNKEKALEQKEQSLSDKSKHIDAREE) is disordered. The KH domain maps to 227–287 (TNSTVHLPDD…IRREIARMTM (61 aa)). The region spanning 353–446 (VLRHSIEVAK…VAAADALSAA (94 aa)) is the HD domain.

The protein belongs to the RNase Y family.

It is found in the cell membrane. Functionally, endoribonuclease that initiates mRNA decay. In Streptococcus sanguinis (strain SK36), this protein is Ribonuclease Y.